The chain runs to 247 residues: tRNA uridine(34) hydroxylase (247 aa).

The Rhodanese domain maps to 124–218; sequence TKQNVILIDT…YLEDTHNKNN (95 aa). Catalysis depends on C178, which acts as the Cysteine persulfide intermediate.

It belongs to the TrhO family.

It catalyses the reaction uridine(34) in tRNA + AH2 + O2 = 5-hydroxyuridine(34) in tRNA + A + H2O. Its function is as follows. Catalyzes oxygen-dependent 5-hydroxyuridine (ho5U) modification at position 34 in tRNAs. The sequence is that of tRNA uridine(34) hydroxylase from Rickettsia prowazekii (strain Madrid E).